Reading from the N-terminus, the 396-residue chain is Elongation factor Tu (396 aa).

The 197-residue stretch at 10 to 206 (KPHVNVGTIG…ALDSYIPTPE (197 aa)) folds into the tr-type G domain. Residues 19–26 (GHVDHGKT) form a G1 region. Position 19-26 (19-26 (GHVDHGKT)) interacts with GTP. Residue T26 coordinates Mg(2+). Positions 60–64 (GITIN) are G2. A G3 region spans residues 81–84 (DCPG). Residues 81-85 (DCPGH) and 136-139 (NKCD) each bind GTP. Residues 136–139 (NKCD) are G4. Residues 174 to 176 (SAK) form a G5 region.

This sequence belongs to the TRAFAC class translation factor GTPase superfamily. Classic translation factor GTPase family. EF-Tu/EF-1A subfamily. In terms of assembly, monomer.

The protein resides in the cytoplasm. It catalyses the reaction GTP + H2O = GDP + phosphate + H(+). Functionally, GTP hydrolase that promotes the GTP-dependent binding of aminoacyl-tRNA to the A-site of ribosomes during protein biosynthesis. The protein is Elongation factor Tu of Ralstonia nicotianae (strain ATCC BAA-1114 / GMI1000) (Ralstonia solanacearum).